Reading from the N-terminus, the 376-residue chain is Thymidine kinase (376 aa).

Positions 1-39 (MASYPCHQHASAFDQAARSRGHSNRRTALRPRRQQEATE) are disordered. Residues 19–32 (SRGHSNRRTALRPR) are compositionally biased toward basic residues. ATP is bound at residue 56 to 63 (GPHGMGKT). Glu-83 acts as the Proton acceptor in catalysis. Positions 101 and 125 each coordinate substrate. Arg-216 is an ATP binding site. Residue Arg-222 participates in substrate binding. The interval 260–280 (GQLSGTAVPPQGAEPQSNAGP) is disordered.

Belongs to the herpesviridae thymidine kinase family. As to quaternary structure, homodimer.

It catalyses the reaction thymidine + ATP = dTMP + ADP + H(+). Its function is as follows. Catalyzes the transfer of the gamma-phospho group of ATP to thymidine to generate dTMP in the salvage pathway of pyrimidine synthesis. The dTMP serves as a substrate for DNA polymerase during viral DNA replication. Allows the virus to be reactivated and to grow in non-proliferative cells lacking a high concentration of phosphorylated nucleic acid precursors. This is Thymidine kinase from Homo sapiens (Human).